A 257-amino-acid polypeptide reads, in one-letter code: Deoxyribose-phosphate aldolase (257 aa).

Residue D102 is the Proton donor/acceptor of the active site. The Schiff-base intermediate with acetaldehyde role is filled by K166. K198 functions as the Proton donor/acceptor in the catalytic mechanism.

Belongs to the DeoC/FbaB aldolase family. DeoC type 2 subfamily.

The protein resides in the cytoplasm. The enzyme catalyses 2-deoxy-D-ribose 5-phosphate = D-glyceraldehyde 3-phosphate + acetaldehyde. It participates in carbohydrate degradation; 2-deoxy-D-ribose 1-phosphate degradation; D-glyceraldehyde 3-phosphate and acetaldehyde from 2-deoxy-alpha-D-ribose 1-phosphate: step 2/2. Functionally, catalyzes a reversible aldol reaction between acetaldehyde and D-glyceraldehyde 3-phosphate to generate 2-deoxy-D-ribose 5-phosphate. This chain is Deoxyribose-phosphate aldolase, found in Shewanella amazonensis (strain ATCC BAA-1098 / SB2B).